A 143-amino-acid chain; its full sequence is Transcriptional regulator MraZ (143 aa).

2 SpoVT-AbrB domains span residues 5–47 (TYTP…PKEE) and 76–119 (ADEQ…DAQA).

Belongs to the MraZ family. Forms oligomers.

The protein localises to the cytoplasm. The protein resides in the nucleoid. This is Transcriptional regulator MraZ from Corynebacterium efficiens (strain DSM 44549 / YS-314 / AJ 12310 / JCM 11189 / NBRC 100395).